The following is a 1226-amino-acid chain: Arf guanine nucleotide exchange factor SYT1 (1226 aa).

2 disordered regions span residues 17-39 (HSND…DKLR) and 113-158 (RNGQ…RNSK). Basic and acidic residues predominate over residues 131 to 142 (SIEKVPKPDGER). At threonine 277 the chain carries Phosphothreonine. Disordered stretches follow at residues 311–405 (NSLM…TGMS), 954–1022 (STGS…NEDY), and 1178–1198 (LEHG…DGID). Positions 349 to 360 (LSRSRSQSTSFV) are enriched in polar residues. Serine 369 carries the phosphoserine modification. Over residues 386–405 (GPTSVYNNKSNANSTITGMS) the composition is skewed to polar residues. The 216-residue stretch at 405–620 (SRRSSSIVNA…TYFYENVTAK (216 aa)) folds into the SEC7 domain. A PH domain is found at 844–1074 (ILQMGAIMNL…DSINLFSAYD (231 aa)). Low complexity-rich tracts occupy residues 956 to 969 (GSHT…SSSA) and 994 to 1017 (SSVS…SSND).

The protein localises to the cytoplasm. Its activity is regulated as follows. Inhibited by brefeldin A. Functionally, guanine nucleotide exchange factor for Arf GTPases, stimulating the nucleotide exchange from the GDP-bound to the GTP-bound form. Catalyzes both the GDP release by and the GTP binding to ARF2. Has no exchange activity on Rab GTPases. Involved in vesicular transport. The chain is Arf guanine nucleotide exchange factor SYT1 (SYT1) from Saccharomyces cerevisiae (strain ATCC 204508 / S288c) (Baker's yeast).